The chain runs to 332 residues: MSTVKEQLIQNLVPEDKLSRCKITVVGVGNVGMACAISILLKGLADELALVDADTNKLRGEALDLLHGSLFLSTPKIVFGKDYNVSANSKLVIITAGARMVSGETRLDLLQRNVAIMKAIVPGIVQNSPDCKIIIVTNPVDILTYVVWKISGFPVGRVIGSGCNLDSARFRYLIGEKLGVNPTSCHGWVLGEHGDSSVPIWSGVNVAGVTLKSLNPAIGTDSDKEHWKNVHKQVVEGGYEVLNMKGYTSWAIGLSVTDLARSILKNLKRVHPVTTLVKGFHGIKEEVFLSIPCVLGQSGITDFVKVNMTAEEEGLLKKSADTLWNMQKDLQL.

Ser2 bears the Blocked amino end (Ser) mark. NAD(+)-binding positions include 29–57 and Arg99; that span reads GNVGMACAISILLKGLADELALVDADTNK. Positions 106, 138, and 169 each coordinate substrate. Asn138 is a binding site for NAD(+). The active-site Proton acceptor is His193. Substrate is bound at residue Thr248.

It belongs to the LDH/MDH superfamily. LDH family. As to quaternary structure, homotetramer. Interacts with RABL2/RABL2A; binds preferentially to GTP-bound RABL2. As to expression, expressed within the midpiece of sperm tail (at protein level).

Its subcellular location is the cytoplasm. It carries out the reaction (S)-lactate + NAD(+) = pyruvate + NADH + H(+). Its pathway is fermentation; pyruvate fermentation to lactate; (S)-lactate from pyruvate: step 1/1. In terms of biological role, possible role in sperm motility. In Mus musculus (Mouse), this protein is L-lactate dehydrogenase C chain (Ldhc).